Consider the following 256-residue polypeptide: GDSL esterase/lipase At1g18120 (256 aa).

A signal peptide spans 1-49 (MYRVYKNNKFILISIPRITNKLWQKNCNLVILLGVLLVLTLFHDPIIVA). Ser67 functions as the Nucleophile in the catalytic mechanism. An N-linked (GlcNAc...) asparagine glycan is attached at Asn181.

This sequence belongs to the 'GDSL' lipolytic enzyme family.

It localises to the secreted. This is GDSL esterase/lipase At1g18120 from Arabidopsis thaliana (Mouse-ear cress).